The sequence spans 121 residues: N-alpha-acetyltransferase 38, NatC auxiliary subunit (121 aa).

The Sm domain maps to 40–113 (PGRRKLQKWL…IVSLSIDEPD (74 aa)).

This sequence belongs to the snRNP Sm proteins family. Component of the N-terminal acetyltransferase C (NatC) complex, which is composed of Naa35, Sbat/Naa38 and Naa30A. Interacts with Smn and Hez; along with Hez and Vlet, may form an accessory subcomplex involved in SMN complex function.

The protein localises to the cytoplasm. The protein resides in the nucleus. Its function is as follows. Auxiliary component of the N-terminal acetyltransferase C (NatC) complex which catalyzes acetylation of N-terminal methionine residues. May have an accessory function in the survival motor neuron (SMN) complex. The protein is N-alpha-acetyltransferase 38, NatC auxiliary subunit of Drosophila melanogaster (Fruit fly).